Here is a 257-residue protein sequence, read N- to C-terminus: Small ribosomal subunit protein uS2 (257 aa).

Positions 229–257 are disordered; that stretch reads QFTPATTSSQEVDKASEQVEIAADDIDEE.

It belongs to the universal ribosomal protein uS2 family.

In Caldicellulosiruptor bescii (strain ATCC BAA-1888 / DSM 6725 / KCTC 15123 / Z-1320) (Anaerocellum thermophilum), this protein is Small ribosomal subunit protein uS2.